We begin with the raw amino-acid sequence, 106 residues long: Defensin-like protein 1 (106 aa).

A signal peptide spans 1 to 25; it reads MARSLCFMAFAVLAMMLFVAYEVQA. Cystine bridges form between Cys-29–Cys-73, Cys-40–Cys-60, Cys-46–Cys-67, and Cys-50–Cys-69.

This sequence belongs to the DEFL family.

The protein resides in the secreted. Its subcellular location is the vacuole. This Nicotiana paniculata protein is Defensin-like protein 1 (THIO1).